Reading from the N-terminus, the 127-residue chain is UPF0738 protein Bsph_1225 (127 aa).

This sequence belongs to the UPF0738 family.

The polypeptide is UPF0738 protein Bsph_1225 (Lysinibacillus sphaericus (strain C3-41)).